Consider the following 346-residue polypeptide: Structure-specific endonuclease subunit SLX1 (346 aa).

Residues 10 to 92 (ALYCVYILRS…TNPHTSLHIP (83 aa)) form the GIY-YIG domain. Residues 238-296 (CVVCKEEIDPEEGGLHAVCSNEGCEGVGHLRCWGRYLLKSEEGGGEGAILPVGGRCPRC) form an SLX1-type zinc finger. Over residues 324-336 (KVKRKRAPRKKTA) the composition is skewed to basic residues. The disordered stretch occupies residues 324 to 346 (KVKRKRAPRKKTAKTKETREEDG). A compositionally biased stretch (basic and acidic residues) spans 337–346 (KTKETREEDG).

Belongs to the SLX1 family. Forms a heterodimer with SLX4. Requires a divalent metal cation as cofactor.

It is found in the nucleus. Catalytic subunit of the SLX1-SLX4 structure-specific endonuclease that resolves DNA secondary structures generated during DNA repair and recombination. Has endonuclease activity towards branched DNA substrates, introducing single-strand cuts in duplex DNA close to junctions with ss-DNA. The sequence is that of Structure-specific endonuclease subunit SLX1 from Podospora anserina (strain S / ATCC MYA-4624 / DSM 980 / FGSC 10383) (Pleurage anserina).